Reading from the N-terminus, the 200-residue chain is Nascent polypeptide-associated complex subunit alpha (200 aa).

Residues 1–19 (MADPRIEELPDEETKKPTV) are compositionally biased toward basic and acidic residues. 2 disordered regions span residues 1-52 (MADP…SRNE) and 120-165 (QQLA…EDKD). The segment covering 20–34 (EELDESSDEESDAEA) has biased composition (acidic residues). One can recognise an NAC-A/B domain in the interval 49–114 (SRNEKKARKA…AKIEDLNASA (66 aa)). Basic and acidic residues predominate over residues 127–143 (AEHDHAGHTHDHKHEAA). Over residues 144 to 160 (KEEEEEEDDGEEVDAEG) the composition is skewed to acidic residues. The UBA domain maps to 161–200 (IEDKDIELVMTQANVSRKKAIKALKENDNDIVNSIMALSV).

It belongs to the NAC-alpha family. Part of the nascent polypeptide-associated complex (NAC), consisting of EGD2 and EGD1. NAC associates with ribosomes via EGD1.

The protein resides in the cytoplasm. It is found in the nucleus. Functionally, component of the nascent polypeptide-associated complex (NAC), a dynamic component of the ribosomal exit tunnel, protecting the emerging polypeptides from interaction with other cytoplasmic proteins to ensure appropriate nascent protein targeting. The NAC complex also promotes mitochondrial protein import by enhancing productive ribosome interactions with the outer mitochondrial membrane and blocks the inappropriate interaction of ribosomes translating non-secretory nascent polypeptides with translocation sites in the membrane of the endoplasmic reticulum. EGD2 may also be involved in transcription regulation. The sequence is that of Nascent polypeptide-associated complex subunit alpha (EGD2) from Chaetomium globosum (strain ATCC 6205 / CBS 148.51 / DSM 1962 / NBRC 6347 / NRRL 1970) (Soil fungus).